The sequence spans 427 residues: 3-phosphoshikimate 1-carboxyvinyltransferase (427 aa).

3-phosphoshikimate contacts are provided by K20, S21, and R25. K20 contacts phosphoenolpyruvate. Phosphoenolpyruvate is bound by residues G92 and R120. The 3-phosphoshikimate site is built by S166, Q168, D312, and K339. Position 168 (Q168) interacts with phosphoenolpyruvate. The Proton acceptor role is filled by D312. Phosphoenolpyruvate contacts are provided by R343 and R385.

This sequence belongs to the EPSP synthase family. As to quaternary structure, monomer.

The protein localises to the cytoplasm. The catalysed reaction is 3-phosphoshikimate + phosphoenolpyruvate = 5-O-(1-carboxyvinyl)-3-phosphoshikimate + phosphate. It participates in metabolic intermediate biosynthesis; chorismate biosynthesis; chorismate from D-erythrose 4-phosphate and phosphoenolpyruvate: step 6/7. Catalyzes the transfer of the enolpyruvyl moiety of phosphoenolpyruvate (PEP) to the 5-hydroxyl of shikimate-3-phosphate (S3P) to produce enolpyruvyl shikimate-3-phosphate and inorganic phosphate. This chain is 3-phosphoshikimate 1-carboxyvinyltransferase, found in Streptococcus agalactiae serotype Ia (strain ATCC 27591 / A909 / CDC SS700).